The sequence spans 379 residues: Queuine tRNA-ribosyltransferase (379 aa).

Aspartate 94 acts as the Proton acceptor in catalysis. Residues 94-98 (DSGGF), aspartate 148, glutamine 191, and glycine 218 contribute to the substrate site. The tract at residues 249–255 (GVGSPDA) is RNA binding. Aspartate 268 functions as the Nucleophile in the catalytic mechanism. The tract at residues 273–277 (TRIAR) is RNA binding; important for wobble base 34 recognition. The Zn(2+) site is built by cysteine 306, cysteine 308, cysteine 311, and histidine 337.

The protein belongs to the queuine tRNA-ribosyltransferase family. Homodimer. Within each dimer, one monomer is responsible for RNA recognition and catalysis, while the other monomer binds to the replacement base PreQ1. It depends on Zn(2+) as a cofactor.

It catalyses the reaction 7-aminomethyl-7-carbaguanine + guanosine(34) in tRNA = 7-aminomethyl-7-carbaguanosine(34) in tRNA + guanine. The protein operates within tRNA modification; tRNA-queuosine biosynthesis. Its function is as follows. Catalyzes the base-exchange of a guanine (G) residue with the queuine precursor 7-aminomethyl-7-deazaguanine (PreQ1) at position 34 (anticodon wobble position) in tRNAs with GU(N) anticodons (tRNA-Asp, -Asn, -His and -Tyr). Catalysis occurs through a double-displacement mechanism. The nucleophile active site attacks the C1' of nucleotide 34 to detach the guanine base from the RNA, forming a covalent enzyme-RNA intermediate. The proton acceptor active site deprotonates the incoming PreQ1, allowing a nucleophilic attack on the C1' of the ribose to form the product. After dissociation, two additional enzymatic reactions on the tRNA convert PreQ1 to queuine (Q), resulting in the hypermodified nucleoside queuosine (7-(((4,5-cis-dihydroxy-2-cyclopenten-1-yl)amino)methyl)-7-deazaguanosine). In Oceanobacillus iheyensis (strain DSM 14371 / CIP 107618 / JCM 11309 / KCTC 3954 / HTE831), this protein is Queuine tRNA-ribosyltransferase.